Consider the following 248-residue polypeptide: Aspartate/glutamate leucyltransferase (248 aa).

This sequence belongs to the R-transferase family. Bpt subfamily.

It localises to the cytoplasm. The catalysed reaction is N-terminal L-glutamyl-[protein] + L-leucyl-tRNA(Leu) = N-terminal L-leucyl-L-glutamyl-[protein] + tRNA(Leu) + H(+). It catalyses the reaction N-terminal L-aspartyl-[protein] + L-leucyl-tRNA(Leu) = N-terminal L-leucyl-L-aspartyl-[protein] + tRNA(Leu) + H(+). Functionally, functions in the N-end rule pathway of protein degradation where it conjugates Leu from its aminoacyl-tRNA to the N-termini of proteins containing an N-terminal aspartate or glutamate. The polypeptide is Aspartate/glutamate leucyltransferase (Methylobacterium nodulans (strain LMG 21967 / CNCM I-2342 / ORS 2060)).